Consider the following 64-residue polypeptide: Small ribosomal subunit protein eS17 (64 aa).

Belongs to the eukaryotic ribosomal protein eS17 family.

The protein is Small ribosomal subunit protein eS17 of Methanocorpusculum labreanum (strain ATCC 43576 / DSM 4855 / Z).